We begin with the raw amino-acid sequence, 388 residues long: Mannitol-1-phosphate 5-dehydrogenase (388 aa).

4–15 (AVHFGAGNIGRG) contributes to the NAD(+) binding site.

Belongs to the mannitol dehydrogenase family.

It catalyses the reaction D-mannitol 1-phosphate + NAD(+) = beta-D-fructose 6-phosphate + NADH + H(+). The sequence is that of Mannitol-1-phosphate 5-dehydrogenase from Thermoanaerobacter pseudethanolicus (strain ATCC 33223 / 39E) (Clostridium thermohydrosulfuricum).